Reading from the N-terminus, the 409-residue chain is Snake venom metalloproteinase BITM02A (409 aa).

An N-terminal signal peptide occupies residues 1 to 20 (MIEVLLVTICLAAFPYQGSS). Residues 21–189 (IILESGNVND…KKASQSNLTP (169 aa)) constitute a propeptide that is removed on maturation. The region spanning 193 to 389 (RYIELFIVVD…ENPQCILNKR (197 aa)) is the Peptidase M12B domain. The Ca(2+) site is built by Glu196 and Asp280. 3 disulfides stabilise this stretch: Cys304/Cys384, Cys344/Cys368, and Cys346/Cys351. His329 is a binding site for Zn(2+). Glu330 is an active-site residue. Residues His333 and His339 each coordinate Zn(2+). Residues Cys384, Asn387, Val399, Asn402, Leu404, Glu406, and Glu409 each coordinate Ca(2+). Positions 390-409 (LRTDTVSTPVSGNELLEAGE) are excised as a propeptide.

It belongs to the venom metalloproteinase (M12B) family. P-I subfamily. Monomer. The cofactor is Zn(2+). Expressed by the venom gland.

The protein resides in the secreted. Snake venom metalloproteinase that impairs hemostasis in the envenomed animal. This Bothrops insularis (Golden lancehead) protein is Snake venom metalloproteinase BITM02A.